Consider the following 260-residue polypeptide: tRNA pseudouridine synthase C (260 aa).

Aspartate 54 is a catalytic residue.

It belongs to the pseudouridine synthase RluA family.

The enzyme catalyses uridine(65) in tRNA = pseudouridine(65) in tRNA. Its function is as follows. Responsible for synthesis of pseudouridine from uracil-65 in transfer RNAs. The protein is tRNA pseudouridine synthase C (truC) of Escherichia coli O157:H7.